The primary structure comprises 228 residues: Probable septum site-determining protein MinC (228 aa).

The protein belongs to the MinC family. Interacts with MinD and FtsZ.

Cell division inhibitor that blocks the formation of polar Z ring septums. Rapidly oscillates between the poles of the cell to destabilize FtsZ filaments that have formed before they mature into polar Z rings. Prevents FtsZ polymerization. This chain is Probable septum site-determining protein MinC, found in Yersinia pseudotuberculosis serotype O:1b (strain IP 31758).